We begin with the raw amino-acid sequence, 435 residues long: MTQEITVIGGGLAGCEAAWQAAKRGVKVRLFEMKPNCYSEAHHLPGLSELVCSNSLRGDSLENAVGLLKEELRRLQSLFMEGAEATKVPAGGALAVDRDLFSQYITSRIESHPLIEVVREEVTRIPEEGIVVLASGPLTSGLLAEEIGRLAGSYLYFYDAIAPIVAADSIDYDKAFRASRYGKGDGDDYLNCPMDEEQYQAFVREIVAAEKVEPKSFEKVVHFEGCMPIEEMASRGPETLRFGPMKPVGLVDPRVGVEPHAVIQLRQENREATMYNLVGFQTKLTWPEQKRIFRMIPGLENAQFLRLGSMHRNTFINAPELLMATCQLKSDQRIFFAGQITGVEGYVESASSGFVAGVNAARLAQGEGLVVPPAETAIGALARHITNTEAGHFQPMNVNYGLFPSLPGRVKKKEKRGLLAQRGLETLEKWLPELS.

9–14 is an FAD binding site; sequence GGGLAG.

It belongs to the MnmG family. TrmFO subfamily. FAD is required as a cofactor.

It is found in the cytoplasm. The enzyme catalyses uridine(54) in tRNA + (6R)-5,10-methylene-5,6,7,8-tetrahydrofolate + NADH + H(+) = 5-methyluridine(54) in tRNA + (6S)-5,6,7,8-tetrahydrofolate + NAD(+). It catalyses the reaction uridine(54) in tRNA + (6R)-5,10-methylene-5,6,7,8-tetrahydrofolate + NADPH + H(+) = 5-methyluridine(54) in tRNA + (6S)-5,6,7,8-tetrahydrofolate + NADP(+). Functionally, catalyzes the folate-dependent formation of 5-methyl-uridine at position 54 (M-5-U54) in all tRNAs. The chain is Methylenetetrahydrofolate--tRNA-(uracil-5-)-methyltransferase TrmFO from Citrifermentans bemidjiense (strain ATCC BAA-1014 / DSM 16622 / JCM 12645 / Bem) (Geobacter bemidjiensis).